Consider the following 436-residue polypeptide: Hydrogenobyrinate a,c-diamide synthase (436 aa).

One can recognise a GATase cobBQ-type domain in the interval 244–435 (HIAVARDDAF…MHVIDFCGEK (192 aa)). Cys-327 serves as the catalytic Nucleophile.

Belongs to the CobB/CbiA family. The cofactor is Mg(2+).

The enzyme catalyses hydrogenobyrinate + 2 L-glutamine + 2 ATP + 2 H2O = hydrogenobyrinate a,c-diamide + 2 L-glutamate + 2 ADP + 2 phosphate + 2 H(+). Its pathway is cofactor biosynthesis; adenosylcobalamin biosynthesis; cob(II)yrinate a,c-diamide from precorrin-2 (aerobic route): step 9/10. In terms of biological role, catalyzes the ATP-dependent amidation of the two carboxylate groups at positions a and c of hydrogenobyrinate, using either L-glutamine or ammonia as the nitrogen source. The polypeptide is Hydrogenobyrinate a,c-diamide synthase (Brucella anthropi (strain ATCC 49188 / DSM 6882 / CCUG 24695 / JCM 21032 / LMG 3331 / NBRC 15819 / NCTC 12168 / Alc 37) (Ochrobactrum anthropi)).